The chain runs to 437 residues: Trigger factor (437 aa).

In terms of domain architecture, PPIase FKBP-type spans 161 to 246 (DDQVNIDFVG…VNSVSAPVLP (86 aa)).

Belongs to the FKBP-type PPIase family. Tig subfamily.

It localises to the cytoplasm. The enzyme catalyses [protein]-peptidylproline (omega=180) = [protein]-peptidylproline (omega=0). Involved in protein export. Acts as a chaperone by maintaining the newly synthesized protein in an open conformation. Functions as a peptidyl-prolyl cis-trans isomerase. This chain is Trigger factor, found in Pseudomonas putida (strain ATCC 700007 / DSM 6899 / JCM 31910 / BCRC 17059 / LMG 24140 / F1).